The primary structure comprises 238 residues: MKFSPSLLRGTLIKRYKRFFADVELEDGTIVTAHCPNTGAMSGCAEPGYTVFLSESTNPKRKLKYTWELAQTFDGHFIGINTHNANKLVAEALDNKVLKEFSDITRWKAEVTPPTANSRFDFALERENTQHQGIIEYMEVKSVTLAENSKGFFPDAVTQRGAKHCLELARLAESGIKTSLLFCVQHTAIESVQVAEYIDPTYAESVKKAADAGVSLLAASCIIDEQKILLNQTLPLIL.

The protein belongs to the SfsA family.

This is Sugar fermentation stimulation protein homolog from Alteromonas mediterranea (strain DSM 17117 / CIP 110805 / LMG 28347 / Deep ecotype).